The sequence spans 253 residues: Sec-independent protein translocase protein TatC (253 aa).

The next 6 helical transmembrane spans lie at 18–38, 69–89, 96–116, 151–171, 187–207, and 208–228; these read VSVG…KSIF, AIVI…APGL, VILP…AFSY, LILG…LAKV, IVVI…SQIF, and MALP…MVNP. The segment at 231–253 is disordered; it reads KDNENNNENNNENNTKENTKSES. Over residues 244–253 the composition is skewed to basic and acidic residues; the sequence is NTKENTKSES.

It belongs to the TatC family. As to quaternary structure, the Tat system comprises two distinct complexes: a TatABC complex, containing multiple copies of TatA, TatB and TatC subunits, and a separate TatA complex, containing only TatA subunits. Substrates initially bind to the TatABC complex, which probably triggers association of the separate TatA complex to form the active translocon.

The protein localises to the cell inner membrane. Part of the twin-arginine translocation (Tat) system that transports large folded proteins containing a characteristic twin-arginine motif in their signal peptide across membranes. Together with TatB, TatC is part of a receptor directly interacting with Tat signal peptides. The protein is Sec-independent protein translocase protein TatC of Helicobacter pylori (strain ATCC 700392 / 26695) (Campylobacter pylori).